We begin with the raw amino-acid sequence, 172 residues long: Crossover junction endodeoxyribonuclease RuvC (172 aa).

Catalysis depends on residues D7, E68, and D141. Mg(2+) contacts are provided by D7, E68, and D141.

It belongs to the RuvC family. In terms of assembly, homodimer which binds Holliday junction (HJ) DNA. The HJ becomes 2-fold symmetrical on binding to RuvC with unstacked arms; it has a different conformation from HJ DNA in complex with RuvA. In the full resolvosome a probable DNA-RuvA(4)-RuvB(12)-RuvC(2) complex forms which resolves the HJ. The cofactor is Mg(2+).

The protein localises to the cytoplasm. The catalysed reaction is Endonucleolytic cleavage at a junction such as a reciprocal single-stranded crossover between two homologous DNA duplexes (Holliday junction).. Functionally, the RuvA-RuvB-RuvC complex processes Holliday junction (HJ) DNA during genetic recombination and DNA repair. Endonuclease that resolves HJ intermediates. Cleaves cruciform DNA by making single-stranded nicks across the HJ at symmetrical positions within the homologous arms, yielding a 5'-phosphate and a 3'-hydroxyl group; requires a central core of homology in the junction. The consensus cleavage sequence is 5'-(A/T)TT(C/G)-3'. Cleavage occurs on the 3'-side of the TT dinucleotide at the point of strand exchange. HJ branch migration catalyzed by RuvA-RuvB allows RuvC to scan DNA until it finds its consensus sequence, where it cleaves and resolves the cruciform DNA. The chain is Crossover junction endodeoxyribonuclease RuvC from Frankia casuarinae (strain DSM 45818 / CECT 9043 / HFP020203 / CcI3).